The primary structure comprises 1510 residues: Cysteine-tryptophan domain-containing zinc finger protein 5 (1510 aa).

Polar residues predominate over residues 174-196 (YCQRTSSENDSNHSQQLLNSGPE). 4 disordered regions span residues 174-198 (YCQRTSSENDSNHSQQLLNSGPEQK), 449-497 (SSLD…CAKD), 555-574 (KPNYDTTRKPNGENEGYVLD), and 582-616 (LHTEDKSLKTEKESATSGLTDKDFSGGGNDGDHKI). Over residues 454 to 465 (GFSHKTKSDKCN) the composition is skewed to basic and acidic residues. Residues 467-476 (QPVTTSSQLQ) show a composition bias toward polar residues. 2 stretches are compositionally biased toward basic and acidic residues: residues 479 to 497 (PAKKTSLKRDRGKVVCAKD) and 556 to 574 (PNYDTTRKPNGENEGYVLD). The CW-type zinc-finger motif lies at 645–698 (SEPVDQWVCCDKCETWRLLPYGMNSDTLPKKWRCSMQSWLPGMNNCKLSEGETT). Residues Cys654, Cys657, Cys678, and Cys690 each coordinate Zn(2+). Residues 768–780 (KQKRIESSDKGEK) show a composition bias toward basic and acidic residues. 3 disordered regions span residues 768–893 (KQKR…RDLF), 1003–1050 (STAA…LDRH), and 1149–1194 (LPIH…VRPD). The segment covering 781–790 (STVTISSGQT) has biased composition (polar residues). The span at 874-893 (NSDRGARASDAGKSDPRDLF) shows a compositional bias: basic and acidic residues. Over residues 1003 to 1016 (STAATSSSSKVSSS) the composition is skewed to low complexity. 2 stretches are compositionally biased toward polar residues: residues 1026–1040 (TRTSPVESVSSSPLR) and 1162–1182 (PDQNGKTLPQYNSNQSDQAKL).

As to expression, highly expressed in young panicles. Expressed at low levels in leaf sheaths, nodes, internodes and axillary buds.

The protein resides in the nucleus. In terms of biological role, binds to histones H3K4me1, H3K4me2 and H3K4me3 in GST pull-down assay. May facilitate the recruitment of effectors to mediate gene expression. This Oryza sativa subsp. japonica (Rice) protein is Cysteine-tryptophan domain-containing zinc finger protein 5.